The primary structure comprises 431 residues: Protein SHQ1 homolog (431 aa).

The protein belongs to the SHQ1 family.

Functionally, required for the quantitative accumulation of H/ACA ribonucleoproteins (RNPs). This chain is Protein SHQ1 homolog, found in Caenorhabditis elegans.